Here is a 462-residue protein sequence, read N- to C-terminus: Cysteine proteinase RD21A (462 aa).

The signal sequence occupies residues 1–21 (MGFLKPTMAILFLAMVAVSSA). The propeptide at 22–136 (VDMSIISYDE…LRYEARVGDE (115 aa)) is activation peptide. Asn-90 carries N-linked (GlcNAc...) asparagine glycosylation. 5 disulfides stabilise this stretch: Cys-158–Cys-200, Cys-192–Cys-233, Cys-291–Cys-342, Cys-375–Cys-387, and Cys-381–Cys-402. The active site involves Cys-161. Residues His-297 and Asn-317 contribute to the active site. Positions 353–462 (KNGENPPNPG…FWSQGRKNIA (110 aa)) are cleaved as a propeptide — removed in mature form. A glycan (N-linked (GlcNAc...) asparagine) is linked at Asn-414.

The protein belongs to the peptidase C1 family. As to quaternary structure, interacts with SERPIN1. Interacts with PRN2. Interacts with WSCP. Interacts with TZF4, TZF5 and TZF6.

The protein resides in the vacuole. It localises to the golgi apparatus. It is found in the cytoplasm. The protein localises to the stress granule. Its subcellular location is the P-body. With respect to regulation, inhibited by the cysteine protease inhibitor E64 (L-trans-epoxysuccinyl-leucylamide-(4-guanido)-butane). Its function is as follows. Cysteine protease that plays a role in immunity, senescence, and biotic and abiotic stresses. Involved in immunity against the necrotrophic fungal pathogen Botrytis cinerea. Involved in elicitor-stimulated programmed cell death (PCD). During infection by the necrotrophic fungal pathogen Botrytis cinerea, functions as a PCD-promoting protease that is released from the ER body or vacuole to the cytoplasm. Accumulates in endoplasmic reticulum-derived bodies in epidermal cells and may participate in cell death in stressed or injured cells. Involved in water stress-induced cell death through its protease activity that is released to the cytoplasm after vacuolar collapse. Possesses protease activity in vitro and is involved in cell death in the transmitting tract and septum epidermis during flower development. Possesses peptide ligase activity. Can ligate peptides to unmodified N-termini of acceptor proteins. Probably ligates through a thioester intermediate. The sequence is that of Cysteine proteinase RD21A from Arabidopsis thaliana (Mouse-ear cress).